The following is a 440-amino-acid chain: Enolase (440 aa).

Q163 is a (2R)-2-phosphoglycerate binding site. Residue E205 is the Proton donor of the active site. Residues D242, E288, and D315 each coordinate Mg(2+). K340, R369, S370, and K391 together coordinate (2R)-2-phosphoglycerate. The Proton acceptor role is filled by K340.

This sequence belongs to the enolase family. Mg(2+) serves as cofactor.

It localises to the cytoplasm. The protein resides in the secreted. It is found in the cell surface. The catalysed reaction is (2R)-2-phosphoglycerate = phosphoenolpyruvate + H2O. It functions in the pathway carbohydrate degradation; glycolysis; pyruvate from D-glyceraldehyde 3-phosphate: step 4/5. Functionally, catalyzes the reversible conversion of 2-phosphoglycerate (2-PG) into phosphoenolpyruvate (PEP). It is essential for the degradation of carbohydrates via glycolysis. The polypeptide is Enolase (Pediococcus pentosaceus (strain ATCC 25745 / CCUG 21536 / LMG 10740 / 183-1w)).